Consider the following 546-residue polypeptide: 2-isopropylmalate synthase (546 aa).

A Pyruvate carboxyltransferase domain is found at 8-271 (ILIFDTTLRD…NSFFGRSSDS (264 aa)). Residues Asp-17, His-208, His-210, and Asn-244 each coordinate Mn(2+). The segment at 408-546 (QLSHVQVSCG…KNKVLSNPKK (139 aa)) is regulatory domain.

It belongs to the alpha-IPM synthase/homocitrate synthase family. LeuA type 1 subfamily. Homodimer. Mn(2+) is required as a cofactor.

The protein localises to the cytoplasm. The catalysed reaction is 3-methyl-2-oxobutanoate + acetyl-CoA + H2O = (2S)-2-isopropylmalate + CoA + H(+). It functions in the pathway amino-acid biosynthesis; L-leucine biosynthesis; L-leucine from 3-methyl-2-oxobutanoate: step 1/4. Functionally, catalyzes the condensation of the acetyl group of acetyl-CoA with 3-methyl-2-oxobutanoate (2-ketoisovalerate) to form 3-carboxy-3-hydroxy-4-methylpentanoate (2-isopropylmalate). This Prochlorococcus marinus subsp. pastoris (strain CCMP1986 / NIES-2087 / MED4) protein is 2-isopropylmalate synthase.